Reading from the N-terminus, the 366-residue chain is Chorismate synthase (366 aa).

NADP(+) is bound by residues R48 and R54. Residues 125-127 (RSS), 238-239 (NA), G278, 293-297 (KPTSS), and R319 contribute to the FMN site.

The protein belongs to the chorismate synthase family. As to quaternary structure, homotetramer. Requires FMNH2 as cofactor.

It catalyses the reaction 5-O-(1-carboxyvinyl)-3-phosphoshikimate = chorismate + phosphate. The protein operates within metabolic intermediate biosynthesis; chorismate biosynthesis; chorismate from D-erythrose 4-phosphate and phosphoenolpyruvate: step 7/7. Functionally, catalyzes the anti-1,4-elimination of the C-3 phosphate and the C-6 proR hydrogen from 5-enolpyruvylshikimate-3-phosphate (EPSP) to yield chorismate, which is the branch point compound that serves as the starting substrate for the three terminal pathways of aromatic amino acid biosynthesis. This reaction introduces a second double bond into the aromatic ring system. The polypeptide is Chorismate synthase (Laribacter hongkongensis (strain HLHK9)).